The chain runs to 363 residues: UDP-N-acetylglucosamine--N-acetylmuramyl-(pentapeptide) pyrophosphoryl-undecaprenol N-acetylglucosamine transferase (363 aa).

Residues 10-12 (TGG), Asn-124, Ser-195, Ile-248, and Gln-293 each bind UDP-N-acetyl-alpha-D-glucosamine.

The protein belongs to the glycosyltransferase 28 family. MurG subfamily.

It is found in the cell membrane. It carries out the reaction Mur2Ac(oyl-L-Ala-gamma-D-Glu-L-Lys-D-Ala-D-Ala)-di-trans,octa-cis-undecaprenyl diphosphate + UDP-N-acetyl-alpha-D-glucosamine = beta-D-GlcNAc-(1-&gt;4)-Mur2Ac(oyl-L-Ala-gamma-D-Glu-L-Lys-D-Ala-D-Ala)-di-trans,octa-cis-undecaprenyl diphosphate + UDP + H(+). It functions in the pathway cell wall biogenesis; peptidoglycan biosynthesis. Its function is as follows. Cell wall formation. Catalyzes the transfer of a GlcNAc subunit on undecaprenyl-pyrophosphoryl-MurNAc-pentapeptide (lipid intermediate I) to form undecaprenyl-pyrophosphoryl-MurNAc-(pentapeptide)GlcNAc (lipid intermediate II). The protein is UDP-N-acetylglucosamine--N-acetylmuramyl-(pentapeptide) pyrophosphoryl-undecaprenol N-acetylglucosamine transferase of Lacticaseibacillus casei (strain BL23) (Lactobacillus casei).